Here is a 465-residue protein sequence, read N- to C-terminus: Nucleolar and spindle-associated protein 1 (465 aa).

Residues 32 to 61 adopt a coiled-coil conformation; sequence ADKLLRALKAHLKNEARKENENQDEIQTSA. Disordered stretches follow at residues 44 to 123, 148 to 207, and 252 to 294; these read KNEA…QNHS, VEVP…TPNF, and GVPA…GSAK. The segment covering 56 to 75 has biased composition (polar residues); that stretch reads EIQTSASSCDEPEIQTSSQE. Residues 76 to 86 are compositionally biased toward basic and acidic residues; the sequence is QAEREPDDHVT. Over residues 87–96 the composition is skewed to basic residues; that stretch reads KTRGRRKTVH. Residue serine 152 is modified to Phosphoserine. Over residues 154–166 the composition is skewed to polar residues; sequence PNESQGDENTVSS. A compositionally biased stretch (basic and acidic residues) spans 169–179; sequence HGIDGNEDPRV. A Phosphothreonine modification is found at threonine 204. The interval 262-405 is interaction with microtubules; the sequence is GRLSVACTPG…HKGKLKPWGQ (144 aa). Phosphoserine is present on serine 265. At threonine 269 the chain carries Phosphothreonine. 4 positions are modified to phosphoserine: serine 272, serine 292, serine 299, and serine 334. A disordered region spans residues 308–338; it reads SAATKDNEHKRSLTKTPARKSPHVTTSVNTP. Phosphothreonine is present on residues threonine 337, threonine 361, and threonine 372. Phosphoserine occurs at positions 375 and 386. The segment at 396–454 is disordered; sequence HKGKLKPWGQSKENNSLHEHVNRVSFHKKTYKQPRLQTREEQRKKHERERKEKKEKVLG. The KEN box motif lies at 407 to 413; the sequence is KENNSLH. Residues 430 to 457 adopt a coiled-coil conformation; sequence RLQTREEQRKKHERERKEKKEKVLGVRR. Over residues 432–453 the composition is skewed to basic and acidic residues; sequence QTREEQRKKHERERKEKKEKVL.

Belongs to the NUSAP family. As to quaternary structure, interacts with DNA and microtubules. Microtubule bundling is inhibited by IPO7, KPNA2 and KPNB1 while association with DNA is also inhibited by IPO7 and KPNA2. Ubiquitinated. Ubiquitination by FZR1 may lead to proteasome-dependent degradation of this protein.

It localises to the cytoplasm. The protein resides in the nucleus. The protein localises to the nucleolus. It is found in the cytoskeleton. Its subcellular location is the spindle. It localises to the chromosome. Functionally, microtubule-associated protein with the capacity to bundle and stabilize microtubules. May associate with chromosomes and promote the organization of mitotic spindle microtubules around them. This chain is Nucleolar and spindle-associated protein 1 (NUSAP1), found in Bos taurus (Bovine).